Reading from the N-terminus, the 149-residue chain is MHCPFCSATDTKVIDSRLVADGHQVRRRRECAECHERFTTFEGAELVMPRVVKQDGSRQPFDEEKLRGGMLRAVEKRPVSMDQIEQALTKIKSTLRGTGEREIKSEMIGNLMMEQLVNLDKVAYIRFASVYRAFEDVSEFGDAIAKLQK.

The segment at 3–34 (CPFCSATDTKVIDSRLVADGHQVRRRRECAEC) is a zinc-finger region. The ATP-cone domain maps to 49–139 (PRVVKQDGSR…VYRAFEDVSE (91 aa)).

The protein belongs to the NrdR family. Zn(2+) is required as a cofactor.

Functionally, negatively regulates transcription of bacterial ribonucleotide reductase nrd genes and operons by binding to NrdR-boxes. This is Transcriptional repressor NrdR from Shewanella woodyi (strain ATCC 51908 / MS32).